The sequence spans 228 residues: Phosphoribosylformylglycinamidine synthase subunit PurQ (228 aa).

Residues 2–228 enclose the Glutamine amidotransferase type-1 domain; sequence TVVVVQFGGS…DGKGILQAFG (227 aa). Catalysis depends on Cys88, which acts as the Nucleophile. Active-site residues include His205 and Glu207.

Part of the FGAM synthase complex composed of 1 PurL, 1 PurQ and 2 PurS subunits.

Its subcellular location is the cytoplasm. The catalysed reaction is N(2)-formyl-N(1)-(5-phospho-beta-D-ribosyl)glycinamide + L-glutamine + ATP + H2O = 2-formamido-N(1)-(5-O-phospho-beta-D-ribosyl)acetamidine + L-glutamate + ADP + phosphate + H(+). It catalyses the reaction L-glutamine + H2O = L-glutamate + NH4(+). Its pathway is purine metabolism; IMP biosynthesis via de novo pathway; 5-amino-1-(5-phospho-D-ribosyl)imidazole from N(2)-formyl-N(1)-(5-phospho-D-ribosyl)glycinamide: step 1/2. Its function is as follows. Part of the phosphoribosylformylglycinamidine synthase complex involved in the purines biosynthetic pathway. Catalyzes the ATP-dependent conversion of formylglycinamide ribonucleotide (FGAR) and glutamine to yield formylglycinamidine ribonucleotide (FGAM) and glutamate. The FGAM synthase complex is composed of three subunits. PurQ produces an ammonia molecule by converting glutamine to glutamate. PurL transfers the ammonia molecule to FGAR to form FGAM in an ATP-dependent manner. PurS interacts with PurQ and PurL and is thought to assist in the transfer of the ammonia molecule from PurQ to PurL. In Haloquadratum walsbyi (strain DSM 16790 / HBSQ001), this protein is Phosphoribosylformylglycinamidine synthase subunit PurQ.